The primary structure comprises 469 residues: Probable indole-3-acetic acid-amido synthetase GH3.13 (469 aa).

Residues 1–26 form a disordered region; the sequence is MTSTSSENAPDHDHDHDASSPAPATA. The segment covering 9–18 has biased composition (basic and acidic residues); the sequence is APDHDHDHDA.

This sequence belongs to the IAA-amido conjugating enzyme family.

Its function is as follows. May catalyze the synthesis of indole-3-acetic acid (IAA)-amino acid conjugates, providing a mechanism for the plant to cope with the presence of excess auxin. The polypeptide is Probable indole-3-acetic acid-amido synthetase GH3.13 (GH3.13) (Oryza sativa subsp. japonica (Rice)).